The sequence spans 115 residues: Mediator of RNA polymerase II transcription subunit 11 (115 aa).

Positions 56–107 (YERLDKSTTQLRKEIQLLDENVGTRLLPINVNKKALGQDTEKMEEQLDLLSA) form a coiled coil.

It belongs to the mediator complex subunit 11 family. As to quaternary structure, component of the Mediator complex, which is composed of at least 21 subunits that form three structurally distinct submodules. The Mediator head module contains MED6, MED8, MED11, SRB4/MED17, SRB5/MED18, ROX3/MED19, SRB2/MED20 and SRB6/MED22, the middle module contains MED1, MED4, NUT1/MED5, MED7, CSE2/MED9, NUT2/MED10, SRB7/MED21 and SOH1/MED31, and the tail module contains MED2, PGD1/MED3, RGR1/MED14, GAL11/MED15 and SIN4/MED16. The head and the middle modules interact directly with RNA polymerase II, whereas the elongated tail module interacts with gene-specific regulatory proteins. MED11 forms a heterodimer with SRB6/MED22. The MED11/22 heterodimer binds to and stabilizes the central head subunit SRB4/MED17. Interacts with TFIIH subunit RAD3.

Its subcellular location is the nucleus. In terms of biological role, component of the Mediator complex, a coactivator involved in the regulated transcription of nearly all RNA polymerase II-dependent genes. Mediator functions as a bridge to convey information from gene-specific regulatory proteins to the basal RNA polymerase II transcription machinery. The Mediator complex, having a compact conformation in its free form, is recruited to promoters by direct interactions with regulatory proteins and serves for the assembly of a functional pre-initiation complex (PIC) with RNA polymerase II and the general transcription factors. The Mediator complex unfolds to an extended conformation and partially surrounds RNA polymerase II, specifically interacting with the unphosphorylated form of the C-terminal domain (CTD) of RNA polymerase II. The Mediator complex dissociates from the RNA polymerase II holoenzyme and stays at the promoter when transcriptional elongation begins. The essential MED11/22 heterodimer specifically functions in promoting stable PIC formation. This Saccharomyces cerevisiae (strain ATCC 204508 / S288c) (Baker's yeast) protein is Mediator of RNA polymerase II transcription subunit 11 (MED11).